An 851-amino-acid polypeptide reads, in one-letter code: M-phase phosphoprotein 8 (851 aa).

Residues 21-54 form a disordered region; sequence NIGRSPEVEGGGAAGEEKDAATKGTVAVGDSEED. Phosphoserine occurs at positions 51, 85, and 136. A Chromo domain is found at 59-118; the sequence is FEVERILDMKCEGGKNLYKVRWKGYTSDDDTWEPEVHLEDCKEVLLEFRKKVAENKAKAV. The segment at 80–87 is histone H3K9me3 binding; that stretch reads WKGYTSDD. Residues 133–174 are disordered; sequence EADSDIDQQGDTKEDTSPRKKKKKIKYKEDKSPDDLRKKRAK. Phosphothreonine is present on T144. Phosphoserine; by CDK1 occurs at positions 149 and 164. Residues 159 to 169 are compositionally biased toward basic and acidic residues; that stretch reads YKEDKSPDDLR. Phosphoserine occurs at positions 188, 263, 267, and 274. The tract at residues 240–302 is disordered; that stretch reads REDVKDNRKT…KTGQDTVQES (63 aa). Over residues 269–278 the composition is skewed to acidic residues; sequence TLEDESEDFL. The span at 279-295 shows a compositional bias: basic and acidic residues; that stretch reads SDNKEKQNVRTAKDKTG. S313 is modified (phosphoserine). The disordered stretch occupies residues 315 to 428; sequence EEAGTRVRRK…DKEEKARKEP (114 aa). Residues 329-364 are compositionally biased toward basic and acidic residues; that stretch reads RKFEEPKEIKKLENTNNFLERKMIPKKQRNQDKGRS. The residue at position 379 (T379) is a Phosphothreonine; by CDK1. 2 positions are modified to phosphoserine: S386 and S394. Over residues 401 to 428 the composition is skewed to basic and acidic residues; it reads EKERKNEPKEKYQKRYDFDKEEKARKEP. A Phosphothreonine modification is found at T447. ANK repeat units lie at residues 591 to 620, 624 to 653, 657 to 686, and 690 to 719; these read TGMT…KVNG, NGTT…FVNV, NGET…DCNI, and HQNS…TLSR.

In terms of assembly, homodimer. Interacts (via chromo domain) with histone H3K9me3. Has the highest affinity for H3K9me3, and lesser affinity for H3K9me2 and H3K9me1. Component of the HUSH complex; at least composed of TASOR, PPHLN1 and MPHOSPH8. Interacts with DNMT3, EHMT1 and SETDB1. Interacts with MORC2; the interaction associateS MORC2 with the HUSH complex which recruits MORC2 to heterochromatic loci. Interacts with ZNF638; leading to recruitment of the HUSH complex to unintegrated retroviral DNA. Interacts with TASOR. Phosphorylated in M (mitotic) phase. Phosphorylation by CDK1 promotes dissociation from chromatin.

It localises to the nucleus. The protein resides in the chromosome. Functionally, heterochromatin component that specifically recognizes and binds methylated 'Lys-9' of histone H3 (H3K9me) and promotes recruitment of proteins that mediate epigenetic repression. Mediates recruitment of the HUSH complex to H3K9me3 sites: the HUSH complex is recruited to genomic loci rich in H3K9me3 and is required to maintain transcriptional silencing by promoting recruitment of SETDB1, a histone methyltransferase that mediates further deposition of H3K9me3, as well as MORC2. Binds H3K9me and promotes DNA methylation by recruiting DNMT3A to target CpG sites; these can be situated within the coding region of the gene. Mediates down-regulation of CDH1 expression. Also represses L1 retrotransposons in collaboration with MORC2 and, probably, SETDB1, the silencing is dependent of repressive epigenetic modifications, such as H3K9me3 mark. Silencing events often occur within introns of transcriptionally active genes, and lead to the down-regulation of host gene expression. The HUSH complex is also involved in the silencing of unintegrated retroviral DNA by being recruited by ZNF638: some part of the retroviral DNA formed immediately after infection remains unintegrated in the host genome and is transcriptionally repressed. This is M-phase phosphoprotein 8 from Rattus norvegicus (Rat).